Reading from the N-terminus, the 230-residue chain is Ropporin-1-like protein (230 aa).

Residues 17–46 (PELPDILKQFTKAAIRTQPADVLRWSAGYF) enclose the RIIa domain.

The protein belongs to the ropporin family. In terms of assembly, component of the axonemal radial spoke complex 1 (RS1), at least composed of spoke head proteins RSPH1, RSPH3, RSPH9 and the cilia-specific component RSPH4A or sperm-specific component RSPH6A, spoke stalk proteins RSPH14, DNAJB13, DYDC1, ROPN1L and NME5, and the anchor protein IQUB. Interacts with FSCB; the interaction increases upon spermatozoa capacitation conditions. May interact with AKAP3. Interacts with CFAP61. In terms of processing, sumoylated, sumoylation decreases upon spermatozoa capacitation conditions.

It localises to the cell projection. Its subcellular location is the cilium. The protein localises to the flagellum. Its function is as follows. Functions as part of axonemal radial spoke complexes that play an important part in the motility of sperm and cilia. Important for male fertility. With ROPN1, involved in fibrous sheath integrity and sperm motility, plays a role in PKA-dependent signaling processes required for spermatozoa capacitation. This chain is Ropporin-1-like protein (ROPN1L), found in Homo sapiens (Human).